The sequence spans 194 residues: MSGEELSGSETEGDAAVRFVLVAAVADNRVIGRDGTMPWHLPEDLKQFKRTTTGHPVVMGRKTYESIARQLGGPLPERHSVLLTTRDLDLPEGAEAVESVESAVAAAEDAADEMGVETVYVVGGATVYEQFLGRAAGLVLTELDAAHEGDTRFPEWDRGKWVETDRDDRDGFSFVTYERKQPAAADRGAEESDE.

Residues 18 to 194 (RFVLVAAVAD…ADRGAEESDE (177 aa)) enclose the DHFR domain. Residues Ala24 and 30 to 36 (VIGRDGT) contribute to the NADP(+) site. Asp44 contacts substrate. 62–63 (KT) provides a ligand contact to NADP(+). Positions 69 and 78 each coordinate substrate. NADP(+) contacts are provided by residues 84–85 (TT) and 123–130 (GGATVYEQ). Thr141 is a substrate binding site. The tract at residues 173–194 (SFVTYERKQPAAADRGAEESDE) is disordered.

It belongs to the dihydrofolate reductase family.

The enzyme catalyses (6S)-5,6,7,8-tetrahydrofolate + NADP(+) = 7,8-dihydrofolate + NADPH + H(+). It participates in cofactor biosynthesis; tetrahydrofolate biosynthesis; 5,6,7,8-tetrahydrofolate from 7,8-dihydrofolate: step 1/1. Its activity is regulated as follows. Maximum activity at KCl concentration of 0.5 M and activity decreases with increasing concentration of KCl. In terms of biological role, key enzyme in folate metabolism. Catalyzes an essential reaction for de novo glycine and purine synthesis, and for DNA precursor synthesis. In Haloferax volcanii (Halobacterium volcanii), this protein is Dihydrofolate reductase HdrB (hdrB).